The sequence spans 468 residues: Mitochondrial distribution and morphology protein 10 (468 aa).

The segment covering 370–386 has biased composition (basic and acidic residues); that stretch reads ERDGLPGIQRDDHDMHH. The interval 370-394 is disordered; sequence ERDGLPGIQRDDHDMHHHPQRPHAS.

This sequence belongs to the MDM10 family. As to quaternary structure, component of the ER-mitochondria encounter structure (ERMES) or MDM complex, composed of MMM1, MDM10, MDM12 and MDM34. Associates with the mitochondrial outer membrane sorting assembly machinery SAM(core) complex.

It is found in the mitochondrion outer membrane. In terms of biological role, component of the ERMES/MDM complex, which serves as a molecular tether to connect the endoplasmic reticulum and mitochondria. Components of this complex are involved in the control of mitochondrial shape and protein biogenesis and may function in phospholipid exchange. MDM10 is involved in the late assembly steps of the general translocase of the mitochondrial outer membrane (TOM complex). Functions in the TOM40-specific route of the assembly of outer membrane beta-barrel proteins, including the association of TOM40 with the receptor TOM22 and small TOM proteins. Can associate with the SAM(core) complex as well as the MDM12-MMM1 complex, both involved in late steps of the major beta-barrel assembly pathway, that is responsible for biogenesis of all outer membrane beta-barrel proteins. May act as a switch that shuttles between both complexes and channels precursor proteins into the TOM40-specific pathway. Plays a role in mitochondrial morphology and in the inheritance of mitochondria. The protein is Mitochondrial distribution and morphology protein 10 of Ajellomyces dermatitidis (strain ER-3 / ATCC MYA-2586) (Blastomyces dermatitidis).